Consider the following 335-residue polypeptide: Biotin synthase (335 aa).

Residues Phe47–Arg276 enclose the Radical SAM core domain. 3 residues coordinate [4Fe-4S] cluster: Cys65, Cys69, and Cys72. Cys109, Cys141, Cys201, and Arg271 together coordinate [2Fe-2S] cluster.

The protein belongs to the radical SAM superfamily. Biotin synthase family. As to quaternary structure, homodimer. It depends on [4Fe-4S] cluster as a cofactor. The cofactor is [2Fe-2S] cluster.

It catalyses the reaction (4R,5S)-dethiobiotin + (sulfur carrier)-SH + 2 reduced [2Fe-2S]-[ferredoxin] + 2 S-adenosyl-L-methionine = (sulfur carrier)-H + biotin + 2 5'-deoxyadenosine + 2 L-methionine + 2 oxidized [2Fe-2S]-[ferredoxin]. It functions in the pathway cofactor biosynthesis; biotin biosynthesis; biotin from 7,8-diaminononanoate: step 2/2. In terms of biological role, catalyzes the conversion of dethiobiotin (DTB) to biotin by the insertion of a sulfur atom into dethiobiotin via a radical-based mechanism. The polypeptide is Biotin synthase (Bacillus subtilis subsp. natto).